A 325-amino-acid polypeptide reads, in one-letter code: Beta-ketoacyl-[acyl-carrier-protein] synthase III (325 aa).

Catalysis depends on residues cysteine 116 and histidine 252. The interval 253–257 (QANLR) is ACP-binding. Asparagine 282 is an active-site residue.

Belongs to the thiolase-like superfamily. FabH family. In terms of assembly, homodimer.

Its subcellular location is the cytoplasm. The catalysed reaction is malonyl-[ACP] + acetyl-CoA + H(+) = 3-oxobutanoyl-[ACP] + CO2 + CoA. Its pathway is lipid metabolism; fatty acid biosynthesis. In terms of biological role, catalyzes the condensation reaction of fatty acid synthesis by the addition to an acyl acceptor of two carbons from malonyl-ACP. Catalyzes the first condensation reaction which initiates fatty acid synthesis and may therefore play a role in governing the total rate of fatty acid production. Possesses both acetoacetyl-ACP synthase and acetyl transacylase activities. Its substrate specificity determines the biosynthesis of branched-chain and/or straight-chain of fatty acids. This chain is Beta-ketoacyl-[acyl-carrier-protein] synthase III, found in Xanthomonas euvesicatoria pv. vesicatoria (strain 85-10) (Xanthomonas campestris pv. vesicatoria).